Here is a 399-residue protein sequence, read N- to C-terminus: Carbamoyl phosphate synthase small chain (399 aa).

The CPSase stretch occupies residues 1 to 209 (MEKFKLLKLG…SAINKKLHTS (209 aa)). Positions 55, 261, and 263 each coordinate L-glutamine. Residues 213–399 (RIIVLDLGVK…VYIIYKSKSS (187 aa)) form the Glutamine amidotransferase type-1 domain. C289 acts as the Nucleophile in catalysis. Residues L290, Q293, N329, G331, and F332 each contribute to the L-glutamine site. Residues H372 and E374 contribute to the active site.

This sequence belongs to the CarA family. In terms of assembly, composed of two chains; the small (or glutamine) chain promotes the hydrolysis of glutamine to ammonia, which is used by the large (or ammonia) chain to synthesize carbamoyl phosphate. Tetramer of heterodimers (alpha,beta)4.

Its subcellular location is the plastid. It is found in the chloroplast. The enzyme catalyses hydrogencarbonate + L-glutamine + 2 ATP + H2O = carbamoyl phosphate + L-glutamate + 2 ADP + phosphate + 2 H(+). It catalyses the reaction L-glutamine + H2O = L-glutamate + NH4(+). Its pathway is amino-acid biosynthesis; L-arginine biosynthesis; carbamoyl phosphate from bicarbonate: step 1/1. The protein operates within pyrimidine metabolism; UMP biosynthesis via de novo pathway; (S)-dihydroorotate from bicarbonate: step 1/3. Its function is as follows. Small subunit of the glutamine-dependent carbamoyl phosphate synthetase (CPSase). CPSase catalyzes the formation of carbamoyl phosphate from the ammonia moiety of glutamine, carbonate, and phosphate donated by ATP, constituting the first step of 2 biosynthetic pathways, one leading to arginine and/or urea and the other to pyrimidine nucleotides. The small subunit (glutamine amidotransferase) binds and cleaves glutamine to supply the large subunit with the substrate ammonia. The sequence is that of Carbamoyl phosphate synthase small chain from Cyanidium caldarium (Red alga).